The chain runs to 117 residues: Cliotide T9 (117 aa).

Positions 1–25 (MAYVRLACLAVIFFFAASVMFTVEA) are cleaved as a signal peptide. A cross-link (cyclopeptide (Gly-Asn)) is located at residues 26–55 (GIPCGESCVFIPCLTTVVGCSCKNKVCYNN). 3 cysteine pairs are disulfide-bonded: cysteine 29/cysteine 45, cysteine 33/cysteine 47, and cysteine 38/cysteine 52. Residues 56–117 (HVIAAEANSI…YLLKDFLKMP (62 aa)) constitute a propeptide, removed in mature form.

Post-translationally, contains 3 disulfide bonds. In terms of processing, this is a cyclic peptide. As to expression, expressed in seed but not in root, nodule, flower, stem, shoot, leaf and pod (at protein level).

Probably participates in a plant defense mechanism. This is Cliotide T9 from Clitoria ternatea (Butterfly pea).